Here is a 530-residue protein sequence, read N- to C-terminus: Ubiquitin carboxyl-terminal hydrolase 17-like protein 10 (530 aa).

The 296-residue stretch at 80–375 (AGLQNMGNTC…QAYVLFYIQK (296 aa)) folds into the USP domain. Residue C89 is the Nucleophile of the active site. The Proton acceptor role is filled by H334. Composition is skewed to basic and acidic residues over residues 382–392 (SESVSRGREPR) and 398–410 (DTDR…ELKR). 2 disordered regions span residues 382 to 410 (SESV…ELKR) and 477 to 530 (NHHP…LVCQ). The segment covering 484–495 (SSLLNLSSTTPT) has biased composition (low complexity). Residues 496-505 (DQESMNTGTL) are compositionally biased toward polar residues. Positions 510–524 (GRTRRSKGKNKHSKR) are enriched in basic residues.

This sequence belongs to the peptidase C19 family. USP17 subfamily.

Its subcellular location is the nucleus. It localises to the endoplasmic reticulum. The enzyme catalyses Thiol-dependent hydrolysis of ester, thioester, amide, peptide and isopeptide bonds formed by the C-terminal Gly of ubiquitin (a 76-residue protein attached to proteins as an intracellular targeting signal).. In terms of biological role, deubiquitinating enzyme that removes conjugated ubiquitin from specific proteins to regulate different cellular processes that may include cell proliferation, progression through the cell cycle, apoptosis, cell migration, and the cellular response to viral infection. The sequence is that of Ubiquitin carboxyl-terminal hydrolase 17-like protein 10 (USP17L10) from Homo sapiens (Human).